Here is an 875-residue protein sequence, read N- to C-terminus: Neurotrypsin (875 aa).

Positions 1–20 (MTLARFVLALMLGALPEVVG) are cleaved as a signal peptide. Asn-26 carries an N-linked (GlcNAc...) asparagine glycan. Residues 29-88 (LHHSHRHSPPPGPHYPYYLPTQQRPPRTRPPPPLPRFPRPPRALPAQRPHALQAGHTPRP) are disordered. Positions 43–53 (YPYYLPTQQRP) are enriched in low complexity. Pro residues predominate over residues 56-71 (TRPPPPLPRFPRPPRA). A Kringle domain is found at 93-165 (CPAGEPWVSV…GKVDWGYCDC (73 aa)). Disulfide bonds link Cys-93–Cys-165, Cys-109–Cys-149, Cys-138–Cys-163, Cys-195–Cys-259, Cys-208–Cys-269, Cys-239–Cys-249, Cys-305–Cys-369, Cys-318–Cys-379, Cys-349–Cys-359, Cys-412–Cys-475, Cys-425–Cys-485, Cys-455–Cys-465, Cys-525–Cys-589, Cys-538–Cys-599, Cys-569–Cys-579, Cys-619–Cys-750, Cys-661–Cys-677, Cys-765–Cys-831, Cys-794–Cys-808, and Cys-821–Cys-850. 4 SRCR domains span residues 170–271 (VRLR…TCSF), 280–381 (IRLA…SCTP), 387–487 (IRLA…ACYP), and 500–601 (VRLV…ICDY). The interval 619–630 (CGLRLLHRRQKR) is zymogen activation region. The Peptidase S1 domain occupies 631–874 (IIGGKNSLRG…FVPWIKSVTK (244 aa)). Catalysis depends on His-676, which acts as the Charge relay system. N-linked (GlcNAc...) asparagine glycosylation occurs at Asn-683. Catalysis depends on Asp-726, which acts as the Charge relay system. Ser-825 (charge relay system) is an active-site residue.

The protein belongs to the peptidase S1 family.

The protein localises to the secreted. Its function is as follows. Plays a role in neuronal plasticity and the proteolytic action may subserve structural reorganizations associated with learning and memory operations. The sequence is that of Neurotrypsin (PRSS12) from Pan troglodytes (Chimpanzee).